The chain runs to 202 residues: Glycerol-3-phosphate acyltransferase (202 aa).

Helical transmembrane passes span 3–23, 87–107, 118–138, 144–164, and 167–187; these read NLIIYAFIYLLGSIPFGLILA, LLWSVAVLAILGHCFSIYLLF, GAMIVLLPLEVLTAFIVWVVI, ISSLASLAALLAFVVSSFIFN, and LEIHTHAPVFIIAFIIVYKHL.

This sequence belongs to the PlsY family. In terms of assembly, probably interacts with PlsX.

It localises to the cell inner membrane. It catalyses the reaction an acyl phosphate + sn-glycerol 3-phosphate = a 1-acyl-sn-glycero-3-phosphate + phosphate. Its pathway is lipid metabolism; phospholipid metabolism. In terms of biological role, catalyzes the transfer of an acyl group from acyl-phosphate (acyl-PO(4)) to glycerol-3-phosphate (G3P) to form lysophosphatidic acid (LPA). This enzyme utilizes acyl-phosphate as fatty acyl donor, but not acyl-CoA or acyl-ACP. The polypeptide is Glycerol-3-phosphate acyltransferase (Campylobacter jejuni subsp. jejuni serotype O:2 (strain ATCC 700819 / NCTC 11168)).